We begin with the raw amino-acid sequence, 66 residues long: Delta-buthitoxin-Hj1a (66 aa).

The LCN-type CS-alpha/beta domain occupies 4-66 (RDAYIAQPHN…EPIKVPGKCH (63 aa)). 4 disulfides stabilise this stretch: Cys14-Cys65, Cys18-Cys38, Cys24-Cys48, and Cys28-Cys50.

This sequence belongs to the long (4 C-C) scorpion toxin superfamily. Sodium channel inhibitor family. Alpha subfamily. Expressed by the venom gland.

The protein resides in the secreted. Its function is as follows. This recombinant toxin slows fast inactivation on Nav1.1/SCN1A (EC(50)=17 nM), Nav1.4/SN4A (EC(50)=7.5 nM), Nav1.5/SCN5A (EC(50)=9.2 nM) and Nav1.6/SCN8A (EC(50)=37.3 nM) voltage-gated sodium channels. On Nav1.1/SCN1A channel, it acts as an agonist by inducing a shift in both the voltage dependence of channel inactivation (alpha-toxin activity) and activation (beta-toxin activity). In vivo, shows moderate insecticidal activities. It induces irreversible paralysis in blowflies and lethal effects in D.melanogaster. The protein is Delta-buthitoxin-Hj1a of Hottentotta judaicus (Black scorpion).